Here is a 335-residue protein sequence, read N- to C-terminus: Tetraacyldisaccharide 4'-kinase (335 aa).

59 to 66 is a binding site for ATP; the sequence is TAGGNGKT.

The protein belongs to the LpxK family.

The enzyme catalyses a lipid A disaccharide + ATP = a lipid IVA + ADP + H(+). The protein operates within glycolipid biosynthesis; lipid IV(A) biosynthesis; lipid IV(A) from (3R)-3-hydroxytetradecanoyl-[acyl-carrier-protein] and UDP-N-acetyl-alpha-D-glucosamine: step 6/6. Transfers the gamma-phosphate of ATP to the 4'-position of a tetraacyldisaccharide 1-phosphate intermediate (termed DS-1-P) to form tetraacyldisaccharide 1,4'-bis-phosphate (lipid IVA). The sequence is that of Tetraacyldisaccharide 4'-kinase from Vibrio parahaemolyticus serotype O3:K6 (strain RIMD 2210633).